Consider the following 196-residue polypeptide: Ribonuclease S-F11 (196 aa).

Cysteine 16 and cysteine 21 are disulfide-bonded. An N-linked (GlcNAc...) asparagine glycan is attached at asparagine 28. Residue histidine 32 is the Proton donor of the active site. RNA is bound by residues histidine 32 and 69–70 (QL). Cystine bridges form between cysteine 46/cysteine 94, cysteine 153/cysteine 186, and cysteine 169/cysteine 180. The active site involves glutamine 87. Residue 90–91 (KH) participates in RNA binding. Residue histidine 91 is the Proton acceptor of the active site.

It belongs to the RNase T2 family. In terms of assembly, monomer.

The protein localises to the secreted. The protein resides in the extracellular space. The catalysed reaction is a ribonucleotidyl-ribonucleotide-RNA + H2O = a 3'-end 3'-phospho-ribonucleotide-RNA + a 5'-end dephospho-ribonucleoside-RNA + H(+). Its function is as follows. Self-incompatibility (SI) is the inherited ability of a flowering plant to prevent self-fertilization by discriminating between self and non-self pollen during pollination. In many species of the Solanaceae, self-incompatibility is controlled by the single, multiallelic locus S. This Nicotiana alata (Winged tobacco) protein is Ribonuclease S-F11.